A 667-amino-acid chain; its full sequence is Probable potassium transport system protein Kup (667 aa).

Helical transmembrane passes span 16-36 (GFII…LYTM), 58-78 (VSLI…LIAL), 101-121 (WLII…ALTP), 146-166 (TNVI…QRFG), 167-187 (TGVI…VLGI), 221-241 (IFIL…YSDL), 253-273 (WPFV…WILA), 294-314 (VYLV…LISG), 343-363 (LYIP…VLYF), 373-393 (YGLA…YYLI), 399-419 (PLLA…FFLA), and 431-451 (VVVL…GTVI).

The protein belongs to the HAK/KUP transporter (TC 2.A.72) family.

The protein resides in the cell membrane. It catalyses the reaction K(+)(in) + H(+)(in) = K(+)(out) + H(+)(out). Functionally, transport of potassium into the cell. Likely operates as a K(+):H(+) symporter. This chain is Probable potassium transport system protein Kup, found in Streptococcus equi subsp. zooepidemicus (strain H70).